A 260-amino-acid chain; its full sequence is UPF0246 protein BURPS668_1321 (260 aa).

The protein belongs to the UPF0246 family.

In Burkholderia pseudomallei (strain 668), this protein is UPF0246 protein BURPS668_1321.